Consider the following 636-residue polypeptide: Probable potassium transport system protein Kup (636 aa).

The next 12 membrane-spanning stretches (helical) occupy residues 22 to 42, 64 to 84, 114 to 134, 150 to 170, 182 to 202, 220 to 240, 261 to 281, 293 to 313, 351 to 371, 383 to 403, 408 to 428, and 433 to 453; these read MGLL…SPLY, ILSL…VMFI, ALMV…SMIT, FEGI…ALFL, LFGP…VHGI, FFIV…LALT, WFAL…AILL, LLAP…ATVI, IYIG…VIGF, VAVT…MLLL, PVLA…FFAA, and IVQG…LMST.

This sequence belongs to the HAK/KUP transporter (TC 2.A.72) family.

It is found in the cell inner membrane. The enzyme catalyses K(+)(in) + H(+)(in) = K(+)(out) + H(+)(out). Its function is as follows. Transport of potassium into the cell. Likely operates as a K(+):H(+) symporter. This Pseudomonas entomophila (strain L48) protein is Probable potassium transport system protein Kup.